A 5154-amino-acid chain; its full sequence is Hydrocephalus-inducing protein (5154 aa).

The interval 409 to 800 (MILEDSVLDP…VLLSSPSPCG (392 aa)) is interaction with KIF9. Residues 997–1009 (RPKEKQSKKEPGK) are compositionally biased toward basic and acidic residues. Disordered regions lie at residues 997-1033 (RPKE…GNPV), 1966-1988 (ENEE…TSIS), 2193-2222 (ADSH…SPLL), 2383-2423 (KLQQ…QGAT), 2521-2572 (HTGT…KAER), and 2706-2762 (KAQE…DIDQ). Residues 1010–1024 (KGSTSSSRRQSKASQ) are compositionally biased toward low complexity. The stretch at 1948–1977 (EMKKSKEEHMKAKYMENLENEEEEMNTSDQ) forms a coiled coil. 2 stretches are compositionally biased toward polar residues: residues 1974 to 1988 (TSDQ…TSIS) and 2209 to 2220 (SETPQVQISSSP). Positions 2308–2444 (YVVMKAQEKA…LKMESIERKV (137 aa)) form a coiled coil. 4 stretches are compositionally biased toward basic and acidic residues: residues 2383 to 2398 (KLQQ…DELK), 2523 to 2535 (GTDE…DDQR), 2548 to 2572 (KDRE…KAER), and 2721 to 2734 (KLKD…ETQK). Positions 2543–2588 (GRKGRKDRERERLEKERAEKERLEREKAERERLEKLKALEERSDVE) form a coiled coil.

As to quaternary structure, interacts with KIF9. In terms of tissue distribution, expressed in brain and testis. Expressed in ciliated epithelial cells lining bronchi and oviduct, and in spermatocytes.

It localises to the cell projection. The protein resides in the cilium. It is found in the cytoplasm. The protein localises to the cytoskeleton. Its subcellular location is the cilium axoneme. It localises to the flagellum. In terms of biological role, required for ciliary motility. The sequence is that of Hydrocephalus-inducing protein (Hydin) from Mus musculus (Mouse).